We begin with the raw amino-acid sequence, 220 residues long: Adenylate kinase (220 aa).

Position 10 to 15 (10 to 15 (GSGKST)) interacts with ATP. The tract at residues 30–59 (SSGDLIRKEIAEGTPLGREMQAYLARGDLI) is NMP. AMP-binding positions include S31, R36, 57 to 59 (DLI), 83 to 86 (GYPR), and Q90. The interval 124–161 (GRRICPKCGAVYHVEFNPPKIPGRCDVCGAELVQREDD) is LID. An ATP-binding site is contributed by R125. Zn(2+) is bound by residues C128 and C131. ATP is bound at residue 134 to 135 (VY). Positions 148 and 151 each coordinate Zn(2+). Residues R158 and R169 each contribute to the AMP site. G197 provides a ligand contact to ATP.

The protein belongs to the adenylate kinase family. Monomer.

It is found in the cytoplasm. It catalyses the reaction AMP + ATP = 2 ADP. It functions in the pathway purine metabolism; AMP biosynthesis via salvage pathway; AMP from ADP: step 1/1. Functionally, catalyzes the reversible transfer of the terminal phosphate group between ATP and AMP. Plays an important role in cellular energy homeostasis and in adenine nucleotide metabolism. The protein is Adenylate kinase of Pyrococcus furiosus (strain ATCC 43587 / DSM 3638 / JCM 8422 / Vc1).